The primary structure comprises 301 residues: Ubiquitin thioesterase OTU1 (301 aa).

Positions 5-83 are UBX-like; that stretch reads RCKAKNGTHL…IVEEEKNKPK (79 aa). Residues 102–227 enclose the OTU domain; it reads VERRVVPADN…GIHYDPLQKV (126 aa). Residues 107 to 113 form a cys-loop region; that stretch reads VPADNSC. The active site involves aspartate 110. The Nucleophile role is filled by cysteine 113. Positions 166-176 are variable-loop; that stretch reads IRRDDTWGGAI. Residues 216 to 220 are his-loop; that stretch reads YDGIH. Isoleucine 219 serves as a coordination point for substrate. The active site involves histidine 220. An S2 site region spans residues 244 to 249; that stretch reads DVILAQ. Residues 271–295 form a C2H2-type zinc finger; the sequence is LRCMVCQTGLVGQKEAREHAKETGH. Histidine 295 is a catalytic residue.

It is found in the cytoplasm. It catalyses the reaction Thiol-dependent hydrolysis of ester, thioester, amide, peptide and isopeptide bonds formed by the C-terminal Gly of ubiquitin (a 76-residue protein attached to proteins as an intracellular targeting signal).. Functionally, hydrolase that can remove conjugated ubiquitin from proteins and participates in endoplasmic reticulum-associated degradation (ERAD) for misfolded lumenal proteins. May act by triming the ubiquitin chain on the associated substrate to facilitate their threading through the VCP/p97 pore. Ubiquitin moieties on substrates may present a steric impediment to the threading process when the substrate is transferred to the VCP pore and threaded through VCP's axial channel. Mediates deubiquitination of 'Lys-27'-, 'Lys-29'- and 'Lys-33'-linked polyubiquitin chains. Also able to hydrolyze 'Lys-11'-linked ubiquitin chains. Cleaves both polyubiquitin and di-ubiquitin. The sequence is that of Ubiquitin thioesterase OTU1 (yod1) from Danio rerio (Zebrafish).